A 707-amino-acid chain; its full sequence is Polyribonucleotide nucleotidyltransferase (707 aa).

Mg(2+) contacts are provided by Asp488 and Asp494. Residues 555 to 614 enclose the KH domain; that stretch reads PRLYVMKINPEKIRDVIGKGGAVIRALTEETGTQINIEEDGTITIASNDSAKADEAKRRI. Residues 624-692 enclose the S1 motif domain; it reads GKVYEGAITK…EKGRVKLSMK (69 aa).

Belongs to the polyribonucleotide nucleotidyltransferase family. Mg(2+) serves as cofactor.

The protein localises to the cytoplasm. It carries out the reaction RNA(n+1) + phosphate = RNA(n) + a ribonucleoside 5'-diphosphate. In terms of biological role, involved in mRNA degradation. Catalyzes the phosphorolysis of single-stranded polyribonucleotides processively in the 3'- to 5'-direction. This is Polyribonucleotide nucleotidyltransferase from Polaromonas sp. (strain JS666 / ATCC BAA-500).